Here is a 469-residue protein sequence, read N- to C-terminus: 3-isopropylmalate dehydratase large subunit (469 aa).

Residues cysteine 347, cysteine 410, and cysteine 413 each contribute to the [4Fe-4S] cluster site.

The protein belongs to the aconitase/IPM isomerase family. LeuC type 1 subfamily. As to quaternary structure, heterodimer of LeuC and LeuD. Requires [4Fe-4S] cluster as cofactor.

It catalyses the reaction (2R,3S)-3-isopropylmalate = (2S)-2-isopropylmalate. It participates in amino-acid biosynthesis; L-leucine biosynthesis; L-leucine from 3-methyl-2-oxobutanoate: step 2/4. In terms of biological role, catalyzes the isomerization between 2-isopropylmalate and 3-isopropylmalate, via the formation of 2-isopropylmaleate. The sequence is that of 3-isopropylmalate dehydratase large subunit from Burkholderia orbicola (strain MC0-3).